The chain runs to 108 residues: MIPNPDPESSINRNQVIISGTITDLASPRYTPAGLMIAEFKLSHCSNQQEAGIQRRIEFEFEAIAIAETAEKIIRIGSGSNVEITGFIAKKNRLSNQLVLHVRDTRII.

The SSB domain maps to 11–108 (INRNQVIISG…VLHVRDTRII (98 aa)).

Belongs to the PriB family. In terms of assembly, homodimer. Interacts with PriA and DnaT. Component of the replication restart primosome. Primosome assembly occurs via a 'hand-off' mechanism. PriA binds to replication forks, subsequently PriB then DnaT bind; DnaT then displaces ssDNA to generate the helicase loading substrate.

Involved in the restart of stalled replication forks, which reloads the replicative helicase on sites other than the origin of replication; the PriA-PriB pathway is the major replication restart pathway. During primosome assembly it facilitates complex formation between PriA and DnaT on DNA; stabilizes PriA on DNA. Stimulates the DNA unwinding activity of PriA helicase. In Nitrosomonas europaea (strain ATCC 19718 / CIP 103999 / KCTC 2705 / NBRC 14298), this protein is Replication restart protein PriB.